The chain runs to 324 residues: tRNA dimethylallyltransferase (324 aa).

17–24 is an ATP binding site; sequence GPTASGKT. 19–24 lines the substrate pocket; sequence TASGKT. Interaction with substrate tRNA regions lie at residues 42-45, 166-170, 251-256, and 284-291; these read DSAL, QRIQR, RCVGYR, and KRQITWLR.

The protein belongs to the IPP transferase family. In terms of assembly, monomer. Mg(2+) serves as cofactor.

The enzyme catalyses adenosine(37) in tRNA + dimethylallyl diphosphate = N(6)-dimethylallyladenosine(37) in tRNA + diphosphate. Its function is as follows. Catalyzes the transfer of a dimethylallyl group onto the adenine at position 37 in tRNAs that read codons beginning with uridine, leading to the formation of N6-(dimethylallyl)adenosine (i(6)A). The sequence is that of tRNA dimethylallyltransferase from Burkholderia orbicola (strain AU 1054).